Reading from the N-terminus, the 287-residue chain is Thiazole synthase (287 aa).

K111 functions as the Schiff-base intermediate with DXP in the catalytic mechanism. Residues G172, 203 to 204, and 225 to 226 contribute to the 1-deoxy-D-xylulose 5-phosphate site; these read AG and NT. Positions 268–287 are disordered; that stretch reads PQEGVISTRPYGSQADEIGS.

This sequence belongs to the ThiG family. In terms of assembly, homotetramer. Forms heterodimers with either ThiH or ThiS.

Its subcellular location is the cytoplasm. The enzyme catalyses [ThiS sulfur-carrier protein]-C-terminal-Gly-aminoethanethioate + 2-iminoacetate + 1-deoxy-D-xylulose 5-phosphate = [ThiS sulfur-carrier protein]-C-terminal Gly-Gly + 2-[(2R,5Z)-2-carboxy-4-methylthiazol-5(2H)-ylidene]ethyl phosphate + 2 H2O + H(+). Its pathway is cofactor biosynthesis; thiamine diphosphate biosynthesis. Functionally, catalyzes the rearrangement of 1-deoxy-D-xylulose 5-phosphate (DXP) to produce the thiazole phosphate moiety of thiamine. Sulfur is provided by the thiocarboxylate moiety of the carrier protein ThiS. In vitro, sulfur can be provided by H(2)S. The chain is Thiazole synthase from Rhodopirellula baltica (strain DSM 10527 / NCIMB 13988 / SH1).